Consider the following 118-residue polypeptide: UPF0342 protein BPUM_0928 (118 aa).

It belongs to the UPF0342 family.

This chain is UPF0342 protein BPUM_0928, found in Bacillus pumilus (strain SAFR-032).